We begin with the raw amino-acid sequence, 440 residues long: UDP-N-acetylmuramoylalanine--D-glutamate ligase (440 aa).

Residue 128 to 134 (GTNGKTT) coordinates ATP.

Belongs to the MurCDEF family.

The protein localises to the cytoplasm. It catalyses the reaction UDP-N-acetyl-alpha-D-muramoyl-L-alanine + D-glutamate + ATP = UDP-N-acetyl-alpha-D-muramoyl-L-alanyl-D-glutamate + ADP + phosphate + H(+). Its pathway is cell wall biogenesis; peptidoglycan biosynthesis. In terms of biological role, cell wall formation. Catalyzes the addition of glutamate to the nucleotide precursor UDP-N-acetylmuramoyl-L-alanine (UMA). In Lawsonia intracellularis (strain PHE/MN1-00), this protein is UDP-N-acetylmuramoylalanine--D-glutamate ligase.